We begin with the raw amino-acid sequence, 430 residues long: Trigger factor (430 aa).

One can recognise a PPIase FKBP-type domain in the interval 163–248 (GDIAVIDFEG…LNSLKRKNMP (86 aa)).

Belongs to the FKBP-type PPIase family. Tig subfamily.

The protein resides in the cytoplasm. It catalyses the reaction [protein]-peptidylproline (omega=180) = [protein]-peptidylproline (omega=0). Involved in protein export. Acts as a chaperone by maintaining the newly synthesized protein in an open conformation. Functions as a peptidyl-prolyl cis-trans isomerase. This is Trigger factor from Brevibacillus brevis (strain 47 / JCM 6285 / NBRC 100599).